We begin with the raw amino-acid sequence, 174 residues long: ATP-dependent protease subunit HslV (174 aa).

Residue Thr-2 is part of the active site. Na(+)-binding residues include Gly-157, Cys-160, and Thr-163.

Belongs to the peptidase T1B family. HslV subfamily. As to quaternary structure, a double ring-shaped homohexamer of HslV is capped on each side by a ring-shaped HslU homohexamer. The assembly of the HslU/HslV complex is dependent on binding of ATP.

Its subcellular location is the cytoplasm. It carries out the reaction ATP-dependent cleavage of peptide bonds with broad specificity.. Allosterically activated by HslU binding. Protease subunit of a proteasome-like degradation complex believed to be a general protein degrading machinery. This Shewanella woodyi (strain ATCC 51908 / MS32) protein is ATP-dependent protease subunit HslV.